The sequence spans 160 residues: Periplasmic nitrate reductase, electron transfer subunit (160 aa).

A signal peptide spans 1 to 25; it reads MKTRIIFAALALAAAMPLLVSGVFA. Heme c is bound by residues histidine 73, cysteine 87, cysteine 90, histidine 91, histidine 108, cysteine 127, cysteine 130, and histidine 131.

The protein belongs to the NapB family. As to quaternary structure, component of the periplasmic nitrate reductase NapAB complex composed of NapA and NapB. Post-translationally, binds 2 heme C groups per subunit.

The protein resides in the periplasm. In terms of biological role, electron transfer subunit of the periplasmic nitrate reductase complex NapAB. Receives electrons from the membrane-anchored tetraheme c-type NapC protein and transfers these to NapA subunit, thus allowing electron flow between membrane and periplasm. Essential for periplasmic nitrate reduction with nitrate as the terminal electron acceptor. This chain is Periplasmic nitrate reductase, electron transfer subunit, found in Azospirillum brasilense.